Consider the following 314-residue polypeptide: Serine/threonine-protein phosphatase CPPED1 (314 aa).

Ser2 carries the phosphoserine modification. The tract at residues 47-250 (KAWSTGDCDN…KVVFSGHYHR (204 aa)) is catalytic. A divalent metal cation contacts are provided by Asp53, Asp90, Asn127, and His247. Position 294 is a phosphoserine (Ser294).

Belongs to the metallophosphoesterase superfamily. CPPED1 family. The cofactor is a divalent metal cation. Expressed in subcutaneous adipose tissue.

It is found in the cytoplasm. It catalyses the reaction O-phospho-L-seryl-[protein] + H2O = L-seryl-[protein] + phosphate. It carries out the reaction O-phospho-L-threonyl-[protein] + H2O = L-threonyl-[protein] + phosphate. Protein phosphatase that dephosphorylates AKT family kinase specifically at 'Ser-473', blocking cell cycle progression and promoting cell apoptosis. May play an inhibitory role in glucose uptake by adipocytes. The chain is Serine/threonine-protein phosphatase CPPED1 (CPPED1) from Homo sapiens (Human).